Reading from the N-terminus, the 1775-residue chain is Internalin I (1775 aa).

A signal peptide spans 1-28 (MKKKFSIVIISVLLLGYLAPFDTLLVGA). A compositionally biased stretch (low complexity) spans 36–50 (DTTVKTAETETATEA). The interval 36 to 97 (DTTVKTAETE…SNIKTEINTD (62 aa)) is disordered. Residues 58 to 85 (DNEKAEEPKEAEASKETTEKEEKAKTKE) are compositionally biased toward basic and acidic residues. LRR repeat units follow at residues 152-176 (AISQ…EGLQ), 180-201 (NLTS…KDLV), 202-224 (NLVS…EGLV), 225-247 (NLQE…AALP), 248-269 (VLKE…NPAG), 274-295 (ELET…AKLP), 296-318 (KLKN…KGAT), 319-341 (KLQL…SGLS), 342-364 (ELEM…KDLP), 365-386 (NLVN…NNLP), 387-409 (KLQT…TDMP), 410-431 (QLKT…DNLP), 432-453 (KLEK…NDLP), 454-475 (RLSY…KKLP), 476-497 (LLEW…TNFP), 498-519 (SLNY…TELP), 520-541 (SLKE…HDMP), 542-563 (NLRK…DNLP), 564-585 (KLQN…HDLP), 586-607 (SLET…DNLP), 608-629 (ELTY…GDLP), 630-650 (KLEI…GTMD), 654-675 (KLRN…GNLS), 682-704 (NLTE…STLS), 705-726 (RLIY…SNLT), 727-748 (TLQE…SDLD), and 749-770 (NLNK…ANMV). The region spanning 782–869 (TYTLPTVLSY…SAVKVTANAE (88 aa)) is the LRRCT domain. 3 consecutive MucBP domains span residues 1507-1566 (DAAA…EQTV), 1572-1631 (AIEP…PQTI), and 1641-1702 (SKKS…SQTV). Positions 1713 to 1737 (SKDEPKVKGKTNQPPSADTKLKVDN) are disordered. The short motif at 1740 to 1744 (LPATG) is the LPXTG sorting signal element. Residue threonine 1743 is modified to Pentaglycyl murein peptidoglycan amidated threonine. Positions 1744–1775 (GDTENMALAVLIGFNMLLVASIFLFRKPKTNQ) are cleaved as a propeptide — removed by sortase.

Belongs to the internalin family.

The protein resides in the secreted. The protein localises to the cell wall. Its function is as follows. A role in virulence could not be demonstrated. This chain is Internalin I (inlI), found in Listeria monocytogenes serotype 4b (strain F2365).